Here is a 116-residue protein sequence, read N- to C-terminus: Large ribosomal subunit protein bL17 (116 aa).

The protein belongs to the bacterial ribosomal protein bL17 family. In terms of assembly, part of the 50S ribosomal subunit. Contacts protein L32.

This chain is Large ribosomal subunit protein bL17, found in Cyanothece sp. (strain PCC 7425 / ATCC 29141).